Consider the following 299-residue polypeptide: Tyrosine recombinase XerC (299 aa).

The 85-residue stretch at 1–85 folds into the Core-binding (CB) domain; it reads MQNELDAYFE…SVRGLYRYLN (85 aa). The region spanning 106–285 is the Tyr recombinase domain; it reads RLPRLLDTDR…DFQHLAKVYD (180 aa). Residues Arg146, Lys170, His237, Arg240, and His263 contribute to the active site. The active-site O-(3'-phospho-DNA)-tyrosine intermediate is Tyr272.

This sequence belongs to the 'phage' integrase family. XerC subfamily. Forms a cyclic heterotetrameric complex composed of two molecules of XerC and two molecules of XerD.

The protein resides in the cytoplasm. Site-specific tyrosine recombinase, which acts by catalyzing the cutting and rejoining of the recombining DNA molecules. The XerC-XerD complex is essential to convert dimers of the bacterial chromosome into monomers to permit their segregation at cell division. It also contributes to the segregational stability of plasmids. This is Tyrosine recombinase XerC from Stutzerimonas stutzeri (strain A1501) (Pseudomonas stutzeri).